Here is a 682-residue protein sequence, read N- to C-terminus: MKPSWLQCRKVTGAGTLGAPLPGSPSVRGAAVTRRALVAGFGGRGCRALTTGSGGEYKTHFAASVADPERFWGKAAEQISWYKPWTKTLESRYPPSTSWFVEGMLNICYNAIDRHIENGQGDKIAIIYDSPVTDTKATISYKEVLEQVSKLAGVLVKQGVKKGDTVVIYMPMIPQAIYTMLACARIGAIHSLIFGGFASKELSTRIDHAKPKVVVTASFGIEPGRKVEYIPLLEEALRIGQHRPDRVLIYSRPNMEKVPLMSGRDLDWEEEMAKAQSHDCVPVLSEHPLYILYTSGTTGLPKGVVRPTGGYAVMLNWTMSSIYGLKPGEVWWAASDLGWVVGHSYICYGPLLHGNTTVLYEGKPVGTPDAGAYFRVLAEHGVAALFTAPTAIRAIRQQDPGAALGKQYSLTRFKTLFVAGERCDVETLEWSKKVFRVPVLDHWWQTETGSPITASCIGLGNSKTPPPGQAGKCVPGYNVMILDDNMQKLKARSLGNIVVKLPLPPGAFSGLWKNQEAFKHLYFEKFPGYYDTMDAGYMDEEGYLYVMSRVDDVINVAGHRISAGAIEESVLSHGTVADCAVVGKEDPLKGHVPLALCVLKKDVNASEEQVLEEIVKHVRQSIGPVAAFRNAVFVKQLPKTRSGKIPRSTLSALVNGKPYKVTPTIEDPSIFGHIEEVLKQAV.

The N-terminal 29 residues, 1-29 (MKPSWLQCRKVTGAGTLGAPLPGSPSVRG), are a transit peptide targeting the mitochondrion. 222-225 (EPGR) lines the CoA pocket. ATP-binding positions include 420-422 (GER) and 441-446 (DHWWQT). An N6-succinyllysine modification is found at Lys-513. At Lys-519 the chain carries N6-acetyllysine. ATP is bound by residues Asp-534, Arg-549, and Arg-560. Arg-619 lines the CoA pocket.

It belongs to the ATP-dependent AMP-binding enzyme family.

It is found in the mitochondrion matrix. The catalysed reaction is acetate + ATP + CoA = acetyl-CoA + AMP + diphosphate. The enzyme catalyses propanoate + ATP + CoA = propanoyl-CoA + AMP + diphosphate. It carries out the reaction butanoate + ATP + CoA = butanoyl-CoA + AMP + diphosphate. Functionally, catalyzes the synthesis of acetyl-CoA from short-chain fatty acids. Propionate is the preferred substrate but can also utilize acetate and butyrate with a much lower affinity. This is Acyl-CoA synthetase short-chain family member 3, mitochondrial (Acss3) from Mus musculus (Mouse).